We begin with the raw amino-acid sequence, 136 residues long: Large ribosomal subunit protein uL16 (136 aa).

The protein belongs to the universal ribosomal protein uL16 family. As to quaternary structure, part of the 50S ribosomal subunit.

Functionally, binds 23S rRNA and is also seen to make contacts with the A and possibly P site tRNAs. The chain is Large ribosomal subunit protein uL16 from Haemophilus influenzae (strain 86-028NP).